We begin with the raw amino-acid sequence, 216 residues long: Putative transmembrane protein RNF32-DT (216 aa).

Residues 177–197 (WIPLLLVAGCVSCFVGLAVCV) form a helical membrane-spanning segment.

In terms of tissue distribution, expressed only in testis.

The protein localises to the cytoplasm. Its subcellular location is the membrane. The protein is Putative transmembrane protein RNF32-DT of Homo sapiens (Human).